The sequence spans 221 residues: Glutathione S-transferase Z1 (221 aa).

In terms of domain architecture, GST N-terminal spans 7-88 (EKLKLYSYWR…YLDEKYPEPP (82 aa)). Glutathione contacts are provided by residues 17–18 (SS), 17–22 (SSCAHR), glutamine 46, 46–47 (QF), 59–60 (TV), valine 60, 72–73 (DS), glutamine 112, and 116–118 (NLA). In terms of domain architecture, GST C-terminal spans 93–218 (DLHKRAVNYQ…LPEKQPDAPS (126 aa)).

It belongs to the GST superfamily. Zeta family. As to quaternary structure, homodimer.

It localises to the cytoplasm. The protein localises to the cytosol. The catalysed reaction is RX + glutathione = an S-substituted glutathione + a halide anion + H(+). Its function is as follows. Acts a maleylacetone isomerase. Also catalyzes the glutathione-dependent dehalogenation of dichloroacetic acid to glyoxylic acid. In vitro, possesses glutathione peroxidase activity toward cumene hydroperoxide and linoleic acid-13-hydroperoxide. This Arabidopsis thaliana (Mouse-ear cress) protein is Glutathione S-transferase Z1 (GSTZ1).